The primary structure comprises 498 residues: ATP synthase subunit beta, chloroplastic (498 aa).

172-179 (GGAGVGKT) contributes to the ATP binding site.

This sequence belongs to the ATPase alpha/beta chains family. F-type ATPases have 2 components, CF(1) - the catalytic core - and CF(0) - the membrane proton channel. CF(1) has five subunits: alpha(3), beta(3), gamma(1), delta(1), epsilon(1). CF(0) has four main subunits: a(1), b(1), b'(1) and c(9-12).

The protein localises to the plastid. The protein resides in the chloroplast thylakoid membrane. The enzyme catalyses ATP + H2O + 4 H(+)(in) = ADP + phosphate + 5 H(+)(out). Its function is as follows. Produces ATP from ADP in the presence of a proton gradient across the membrane. The catalytic sites are hosted primarily by the beta subunits. The chain is ATP synthase subunit beta, chloroplastic from Morus indica (Mulberry).